We begin with the raw amino-acid sequence, 1061 residues long: Transcription termination factor 2 (1061 aa).

Disordered stretches follow at residues 1–163 and 212–253; these read MSSE…TAEA and ILSS…VKTS. Residues 32–46 show a composition bias toward low complexity; the sequence is LSKSSRLSKSSRPSS. Phosphoserine is present on residues Ser-108 and Ser-110. The span at 138–152 shows a compositional bias: acidic residues; it reads LSDDDSEIEYSDEVQ. Phosphoserine occurs at positions 214 and 215. At Thr-216 the chain carries Phosphothreonine. Over residues 237–253 the composition is skewed to polar residues; that stretch reads KSLSPRSSAGASVVKTS. One can recognise a Helicase ATP-binding domain in the interval 452–652; sequence WRERKLPRGG…YALLKFLRCS (201 aa). Residue 465–472 participates in ATP binding; that stretch reads DDMGLGKT. The interval 485 to 523 is disordered; sequence GQEMSEGKDESSDSDSEDDKNKKRKSVTGWKSKGRKDTR. The span at 506–522 shows a compositional bias: basic residues; sequence KKRKSVTGWKSKGRKDT. Positions 603 to 606 match the DEAH box motif; sequence DEAH. The Helicase C-terminal domain maps to 891–1056; it reads KINMVIQILK…SSKLTIDDLK (166 aa).

It belongs to the SNF2/RAD54 helicase family.

It localises to the nucleus. DsDNA-dependent ATPase which acts as a transcription termination factor by coupling ATP hydrolysis with removal of RNA polymerase II from the DNA template. The sequence is that of Transcription termination factor 2 (lds) from Drosophila melanogaster (Fruit fly).